The following is a 221-amino-acid chain: Endo-1,4-beta-xylanase 11A (221 aa).

Positions 1–17 (MVSFTTLLTAVATAVSA) are cleaved as a signal peptide. Residues 28 to 218 (RGIQPGTGVH…SSGSAEIEVR (191 aa)) enclose the GH11 domain. Asn-89 carries an N-linked (GlcNAc...) asparagine glycan. The active-site Nucleophile is Glu-113. Glu-205 (proton donor) is an active-site residue.

Belongs to the glycosyl hydrolase 11 (cellulase G) family.

The protein localises to the secreted. It catalyses the reaction Endohydrolysis of (1-&gt;4)-beta-D-xylosidic linkages in xylans.. It functions in the pathway glycan degradation; xylan degradation. With respect to regulation, retains an activity of 52.5% in the presence of 5 mM SDS. In terms of biological role, endo-1,4-beta-xylanase involved in the hydrolysis of xylan, a major structural heterogeneous polysaccharide found in plant biomass representing the second most abundant polysaccharide in the biosphere, after cellulose. Is an alkali-tolerant enzyme, exhibiting 50.6% of activity at pH 9.0, and 26.9% even at pH 10.0. The polypeptide is Endo-1,4-beta-xylanase 11A (Humicola insolens (Soft-rot fungus)).